We begin with the raw amino-acid sequence, 273 residues long: MVKHFAVIGDPIAHSLSPLMHNAGYKALNLAADYQKFQVSPEDLQEAVFGLKALGFSGWNVTVPHKETILPFLDELTEEAVRAGAVNTVKVDKGRLIGHNTDGSGFVRSLQEHMELDECKQIVILGAGGAAKGIAMALAPFGAQLCLMNRTPERGAELVEKILEGGGQARQEPWGRGEWLAQADCVIQTTSIGLKKEEYPFSLAGIRPGTLVVDIIFNPWETPFLHSAKAMGCKTVNGIDMLLYQGVNAWEFWLEDKAPVESMRKALYQALAV.

Residues S15–S17 and T62 each bind shikimate. K66 functions as the Proton acceptor in the catalytic mechanism. E78 provides a ligand contact to NADP(+). N87 and D102 together coordinate shikimate. Residues G126–A130, N149–R154, I215, and G238 each bind NADP(+).

This sequence belongs to the shikimate dehydrogenase family. Homodimer.

It carries out the reaction shikimate + NADP(+) = 3-dehydroshikimate + NADPH + H(+). It functions in the pathway metabolic intermediate biosynthesis; chorismate biosynthesis; chorismate from D-erythrose 4-phosphate and phosphoenolpyruvate: step 4/7. In terms of biological role, involved in the biosynthesis of the chorismate, which leads to the biosynthesis of aromatic amino acids. Catalyzes the reversible NADPH linked reduction of 3-dehydroshikimate (DHSA) to yield shikimate (SA). This Desulfitobacterium hafniense (strain Y51) protein is Shikimate dehydrogenase (NADP(+)).